Reading from the N-terminus, the 124-residue chain is Glutaredoxin-2 (124 aa).

Cys-13 and Cys-16 are disulfide-bonded.

This sequence belongs to the glutaredoxin family. Homodimer.

The protein resides in the host cytoplasm. Glutaredoxin necessary for virion morphogenesis and virus replication. Functions as a thiol-disulfide transfer protein between membrane-associated OPG128 and substrates OPG095 or OPG053. The complete pathway for formation of disulfide bonds in intracellular virion membrane proteins sequentially involves oxidation of OPG072, OPG128 and OPG088. Exhibit thioltransferase and dehydroascorbate reductase activities in vitro. The protein is Glutaredoxin-2 (OPG088) of Oryctolagus cuniculus (Rabbit).